Reading from the N-terminus, the 463-residue chain is DNA polymerase subunit gamma-2, mitochondrial (463 aa).

The transit peptide at 1–44 directs the protein to the mitochondrion; it reads MLLTLKNTGQLLVAACSKVARSLAKYHPRVNHHRHCVWCSKRGL.

In terms of assembly, heterotrimer composed of a catalytic subunit and a homodimer of accessory subunits.

Its subcellular location is the mitochondrion. Its function is as follows. Mitochondrial polymerase processivity subunit. It regulates the polymerase and exonuclease activities promoting processive DNA synthesis. Binds to ss-DNA. The sequence is that of DNA polymerase subunit gamma-2, mitochondrial (polg2) from Xenopus laevis (African clawed frog).